The sequence spans 106 residues: UPF0145 protein Fphi_1781 (106 aa).

This sequence belongs to the UPF0145 family.

In Francisella philomiragia subsp. philomiragia (strain ATCC 25017 / CCUG 19701 / FSC 153 / O#319-036), this protein is UPF0145 protein Fphi_1781.